The sequence spans 178 residues: Inorganic pyrophosphatase (178 aa).

Residues lysine 30, arginine 44, and tyrosine 56 each coordinate substrate. Mg(2+) is bound by residues aspartate 66, aspartate 71, and aspartate 103. Substrate is bound at residue tyrosine 140.

The protein belongs to the PPase family. Homohexamer. The cofactor is Mg(2+).

The protein localises to the cytoplasm. It catalyses the reaction diphosphate + H2O = 2 phosphate + H(+). Functionally, catalyzes the hydrolysis of inorganic pyrophosphate (PPi) forming two phosphate ions. In Pyrococcus horikoshii (strain ATCC 700860 / DSM 12428 / JCM 9974 / NBRC 100139 / OT-3), this protein is Inorganic pyrophosphatase.